We begin with the raw amino-acid sequence, 445 residues long: Homoserine O-succinyltransferase (445 aa).

An AB hydrolase-1 domain is found at 45-411 (NAVLICHALS…APHGHDSFLF (367 aa)). Serine 153 (nucleophile) is an active-site residue. Arginine 223 is a binding site for substrate. Active-site residues include aspartate 373 and histidine 406. Aspartate 407 is a substrate binding site.

The protein belongs to the AB hydrolase superfamily. MetX family. As to quaternary structure, homodimer.

It localises to the cytoplasm. It catalyses the reaction L-homoserine + succinyl-CoA = O-succinyl-L-homoserine + CoA. It functions in the pathway amino-acid biosynthesis; L-methionine biosynthesis via de novo pathway; O-succinyl-L-homoserine from L-homoserine: step 1/1. Functionally, transfers a succinyl group from succinyl-CoA to L-homoserine, forming succinyl-L-homoserine. The protein is Homoserine O-succinyltransferase of Psychrobacter arcticus (strain DSM 17307 / VKM B-2377 / 273-4).